The chain runs to 1119 residues: Period circadian protein homolog 3 (1119 aa).

A disordered region spans residues 1–48; the sequence is MDPCGNPAVPGGDCPQTRGPGLQGSSGQEGPLQGICVDSSHSEHEDRN. The Nuclear export signal 1 signature appears at 54–63; sequence LIMVVQEMKK. 2 PAS domains span residues 120 to 187 and 259 to 325; these read LASE…PTQL and YEAP…KVLK. Residues 334–377 form the PAC domain; it reads HSPIRFCTQNGDYVILDSSWSSFVNPWSRKVSFIIGRHKVRTSP. Residues 400-409 carry the Nuclear export signal 3 motif; sequence LQEQIHRLLL. Low complexity predominate over residues 419 to 428; that stretch reads GYGSLGSSGS. 4 disordered regions span residues 419–449, 483–530, 718–744, and 878–910; these read GYGSLGSSGSQEQHISVTSSSESSGHCVEEA, VKPV…SSSY, HSRCAGSERRKHKRKKLPTPVDSSSSS, and LEPTPSDHGPRRVEENWETHSEEEHPFISSRSS. Composition is skewed to polar residues over residues 429–442 and 491–515; these read QEQHISVTSSSESS and TEPQGSDEQKDFSSSQTLKNKSTDT. The interval 551–750 is CSNK1E binding domain; that stretch reads LKRKCISCTN…SSSSAHLCPH (200 aa). The Nuclear localization signal motif lies at 720-739; the sequence is RCAGSERRKHKRKKLPTPVD. Basic and acidic residues predominate over residues 885 to 903; that stretch reads HGPRRVEENWETHSEEEHP. The residue at position 907 (serine 907) is a Phosphoserine. The Nuclear export signal 2 motif lies at 913 to 920; sequence LQLNLLQE. The segment at 947 to 1011 is disordered; it reads GNSGSRSPPC…QDTHRDRAFS (65 aa). The segment covering 970–988 has biased composition (low complexity); the sequence is SPSAAASGSSASSVHGSGS. Positions 989–1001 are enriched in polar residues; the sequence is DYTSEVSENGQRS. The tract at residues 1037–1119 is CRY binding domain; it reads ERGRDTVLRE…VQQKTPVEQL (83 aa).

Homodimer. Component of the circadian core oscillator, which includes the CRY proteins, CLOCK or NPAS2, BMAL1 or BMAL2, CSNK1D and/or CSNK1E, TIMELESS and the PER proteins. Interacts directly with PER1, PER2, CRY1, CRY2, and TIMELESS; interaction with CRY1 and CRY2 is weak and not rhythmic. Interacts with FBXW11 and BTRC. In terms of processing, phosphorylation by CSNK1E is weak and appears to require association with PER1 and translocation to the nucleus. Ubiquitinated.

The protein resides in the cytoplasm. The protein localises to the nucleus. Functionally, originally described as a core component of the circadian clock. The circadian clock, an internal time-keeping system, regulates various physiological processes through the generation of approximately 24 hour circadian rhythms in gene expression, which are translated into rhythms in metabolism and behavior. It is derived from the Latin roots 'circa' (about) and 'diem' (day) and acts as an important regulator of a wide array of physiological functions including metabolism, sleep, body temperature, blood pressure, endocrine, immune, cardiovascular, and renal function. Consists of two major components: the central clock, residing in the suprachiasmatic nucleus (SCN) of the brain, and the peripheral clocks that are present in nearly every tissue and organ system. Both the central and peripheral clocks can be reset by environmental cues, also known as Zeitgebers (German for 'timegivers'). The predominant Zeitgeber for the central clock is light, which is sensed by retina and signals directly to the SCN. The central clock entrains the peripheral clocks through neuronal and hormonal signals, body temperature and feeding-related cues, aligning all clocks with the external light/dark cycle. Circadian rhythms allow an organism to achieve temporal homeostasis with its environment at the molecular level by regulating gene expression to create a peak of protein expression once every 24 hours to control when a particular physiological process is most active with respect to the solar day. Transcription and translation of core clock components (CLOCK, NPAS2, BMAL1, BMAL2, PER1, PER2, PER3, CRY1 and CRY2) plays a critical role in rhythm generation, whereas delays imposed by post-translational modifications (PTMs) are important for determining the period (tau) of the rhythms (tau refers to the period of a rhythm and is the length, in time, of one complete cycle). A diurnal rhythm is synchronized with the day/night cycle, while the ultradian and infradian rhythms have a period shorter and longer than 24 hours, respectively. Disruptions in the circadian rhythms contribute to the pathology of cardiovascular diseases, cancer, metabolic syndromes and aging. A transcription/translation feedback loop (TTFL) forms the core of the molecular circadian clock mechanism. Transcription factors, CLOCK or NPAS2 and BMAL1 or BMAL2, form the positive limb of the feedback loop, act in the form of a heterodimer and activate the transcription of core clock genes and clock-controlled genes (involved in key metabolic processes), harboring E-box elements (5'-CACGTG-3') within their promoters. The core clock genes: PER1/2/3 and CRY1/2 which are transcriptional repressors form the negative limb of the feedback loop and interact with the CLOCK|NPAS2-BMAL1|BMAL2 heterodimer inhibiting its activity and thereby negatively regulating their own expression. This heterodimer also activates nuclear receptors NR1D1, NR1D2, RORA, RORB and RORG, which form a second feedback loop and which activate and repress BMAL1 transcription, respectively. Has a redundant role with the other PER proteins PER1 and PER2 and is not essential for the circadian rhythms maintenance. In contrast, plays an important role in sleep-wake timing and sleep homeostasis probably through the transcriptional regulation of sleep homeostasis-related genes, without influencing circadian parameters. Can bind heme. This is Period circadian protein homolog 3 (Per3) from Rattus norvegicus (Rat).